We begin with the raw amino-acid sequence, 393 residues long: Bifunctional chrysanthemol synthase, chloroplastic (393 aa).

The segment covering 1-18 (MACSSSLSSKWASWGASS) has biased composition (low complexity). The interval 1 to 22 (MACSSSLSSKWASWGASSRPHP) is disordered. A chloroplast-targeting transit peptide spans 1 to 53 (MACSSSLSSKWASWGASSRPHPSVQPFVTRKNVVRYHKPTSELSYSPLTTTLS). Residues lysine 99, arginine 102, and glutamine 137 each contribute to the dimethylallyl diphosphate site. Mg(2+)-binding residues include aspartate 144 and aspartate 148. Dimethylallyl diphosphate-binding residues include arginine 153, arginine 154, lysine 241, glutamine 280, aspartate 287, lysine 297, and lysine 306.

This sequence belongs to the FPP/GGPP synthase family. The cofactor is Mg(2+). Restricted to glandular trichomes during achene maturation. Expressed in flowers and in both ray and disk florets.

Its subcellular location is the plastid. It localises to the chloroplast. The catalysed reaction is 2 dimethylallyl diphosphate = (R,R)-chrysanthemyl diphosphate + diphosphate. It catalyses the reaction (R,R)-chrysanthemyl diphosphate + H2O = (R,R)-chrysanthemol + diphosphate. It carries out the reaction (R)-lavandulyl diphosphate + H2O = (R)-lavandulol + diphosphate. It participates in isoprenoid biosynthesis. In terms of biological role, component of the monoterpenoid pyrethrins biosynthesis; pyrethrins are widely used plant-derived pesticide. Catalyzes the condensation of two molecules of dimethylallyl diphosphate to produce chrysanthemyl diphosphate (CPP), a monoterpene with a non-head-to-tail or irregular c1'-2-3 linkage between isoprenoid units. In a second step, hydrolyzes the diphosphate moiety of CPP to form chrysanthemol. With a lower efficiency, can also converts dimethylallyl diphosphate into lavandulyl diphosphate (LPP), and subsequently LPP into lavandulol. The protein is Bifunctional chrysanthemol synthase, chloroplastic of Tanacetum cinerariifolium (Dalmatian daisy).